The sequence spans 346 residues: Phenylalanine--tRNA ligase alpha subunit (346 aa).

Glu-262 is a Mg(2+) binding site.

Belongs to the class-II aminoacyl-tRNA synthetase family. Phe-tRNA synthetase alpha subunit type 1 subfamily. In terms of assembly, tetramer of two alpha and two beta subunits. Requires Mg(2+) as cofactor.

It is found in the cytoplasm. It carries out the reaction tRNA(Phe) + L-phenylalanine + ATP = L-phenylalanyl-tRNA(Phe) + AMP + diphosphate + H(+). This Ehrlichia chaffeensis (strain ATCC CRL-10679 / Arkansas) protein is Phenylalanine--tRNA ligase alpha subunit.